Here is a 63-residue protein sequence, read N- to C-terminus: Large ribosomal subunit protein uL29 (63 aa).

Belongs to the universal ribosomal protein uL29 family.

The polypeptide is Large ribosomal subunit protein uL29 (rpmC) (Aggregatibacter actinomycetemcomitans (Actinobacillus actinomycetemcomitans)).